Consider the following 282-residue polypeptide: Bifunctional protein FolD (282 aa).

Residues 165–167 and Ser190 each bind NADP(+); that span reads GRS.

Belongs to the tetrahydrofolate dehydrogenase/cyclohydrolase family. As to quaternary structure, homodimer.

It catalyses the reaction (6R)-5,10-methylene-5,6,7,8-tetrahydrofolate + NADP(+) = (6R)-5,10-methenyltetrahydrofolate + NADPH. It carries out the reaction (6R)-5,10-methenyltetrahydrofolate + H2O = (6R)-10-formyltetrahydrofolate + H(+). It participates in one-carbon metabolism; tetrahydrofolate interconversion. Its function is as follows. Catalyzes the oxidation of 5,10-methylenetetrahydrofolate to 5,10-methenyltetrahydrofolate and then the hydrolysis of 5,10-methenyltetrahydrofolate to 10-formyltetrahydrofolate. The sequence is that of Bifunctional protein FolD from Macrococcus caseolyticus (strain JCSC5402) (Macrococcoides caseolyticum).